A 178-amino-acid chain; its full sequence is MFKGTTILSVRRGNHVVMGGDGQVSIGNTVAKSNARKVRLMSDGKVLAGFAGSTADAFTLFERFEGKLSKHGGNLTRAAVEMAKDWRTDRVLRRLEAMLAVADEHCSLLISGNGDVLEPEEGVIAIGSGGPYALSAARALLRHTSLNPRQIVESSLEVAAEICVFTNNNLTIEELGGE.

Thr5 is an active-site residue. Na(+)-binding residues include Ala160, Cys163, and Thr166.

The protein belongs to the peptidase T1B family. HslV subfamily. As to quaternary structure, a double ring-shaped homohexamer of HslV is capped on each side by a ring-shaped HslU homohexamer. The assembly of the HslU/HslV complex is dependent on binding of ATP.

It is found in the cytoplasm. It carries out the reaction ATP-dependent cleavage of peptide bonds with broad specificity.. Its activity is regulated as follows. Allosterically activated by HslU binding. Its function is as follows. Protease subunit of a proteasome-like degradation complex believed to be a general protein degrading machinery. The protein is ATP-dependent protease subunit HslV of Magnetococcus marinus (strain ATCC BAA-1437 / JCM 17883 / MC-1).